The following is a 513-amino-acid chain: ATP synthase subunit alpha 2 (513 aa).

Residue 169–176 (GDRQVGKT) participates in ATP binding.

It belongs to the ATPase alpha/beta chains family. As to quaternary structure, F-type ATPases have 2 components, CF(1) - the catalytic core - and CF(0) - the membrane proton channel. CF(1) has five subunits: alpha(3), beta(3), gamma(1), delta(1), epsilon(1). CF(0) has three main subunits: a(1), b(2) and c(9-12). The alpha and beta chains form an alternating ring which encloses part of the gamma chain. CF(1) is attached to CF(0) by a central stalk formed by the gamma and epsilon chains, while a peripheral stalk is formed by the delta and b chains.

The protein resides in the cell inner membrane. It catalyses the reaction ATP + H2O + 4 H(+)(in) = ADP + phosphate + 5 H(+)(out). Produces ATP from ADP in the presence of a proton gradient across the membrane. The alpha chain is a regulatory subunit. This Psychromonas ingrahamii (strain DSM 17664 / CCUG 51855 / 37) protein is ATP synthase subunit alpha 2.